Here is a 240-residue protein sequence, read N- to C-terminus: Uridylate kinase (240 aa).

ATP-binding positions include 15 to 18, Gly-58, and Arg-62; that span reads KISG. UMP is bound by residues Asp-77 and 138 to 145; that span reads TGNPLFTT. ATP-binding residues include Thr-165, Tyr-171, and Asp-174.

This sequence belongs to the UMP kinase family. In terms of assembly, homohexamer.

The protein resides in the cytoplasm. It catalyses the reaction UMP + ATP = UDP + ADP. It participates in pyrimidine metabolism; CTP biosynthesis via de novo pathway; UDP from UMP (UMPK route): step 1/1. With respect to regulation, inhibited by UTP. Its function is as follows. Catalyzes the reversible phosphorylation of UMP to UDP. This is Uridylate kinase from Buchnera aphidicola subsp. Schizaphis graminum (strain Sg).